Here is a 405-residue protein sequence, read N- to C-terminus: Splicing factor 45 (405 aa).

Position 2 is an N-acetylserine (serine 2). At serine 2 the chain carries Phosphoserine. A Glycyl lysine isopeptide (Lys-Gly) (interchain with G-Cter in SUMO2) cross-link involves residue lysine 15. Residue lysine 21 is modified to N6-acetyllysine. Glycyl lysine isopeptide (Lys-Gly) (interchain with G-Cter in SUMO2) cross-links involve residues lysine 24 and lysine 33. Residue lysine 41 is modified to N6-acetyllysine; alternate. Lysine 41 is covalently cross-linked (Glycyl lysine isopeptide (Lys-Gly) (interchain with G-Cter in SUMO2); alternate). The span at 57-68 (LKRGGSSDDRQI) shows a compositional bias: basic and acidic residues. Disordered regions lie at residues 57-88 (LKRG…SGFS) and 114-233 (RQRE…FLAN). Lysine 58 participates in a covalent cross-link: Glycyl lysine isopeptide (Lys-Gly) (interchain with G-Cter in SUMO2). Threonine 71 is modified (phosphothreonine). The segment covering 114–153 (RQREERQRQRELERQKEIEEREKRRKDRHEASGFSRRPDP) has biased composition (basic and acidic residues). Serine 155 and serine 169 each carry phosphoserine. The span at 182–200 (VEKDKELPRDFPYEEDSRP) shows a compositional bias: basic and acidic residues. Residue serine 222 is modified to Phosphoserine. A G-patch domain is found at 235 to 283 (GGTVAHKIMQKYGFREGQGLGKHEQGLSTALSVEKTSKRGGKIIVGDAT). Threonine 237 is modified (phosphothreonine). Lysine 256 participates in a covalent cross-link: Glycyl lysine isopeptide (Lys-Gly) (interchain with G-Cter in SUMO2). Serine 266 is subject to Phosphoserine. Lysine 276 participates in a covalent cross-link: Glycyl lysine isopeptide (Lys-Gly) (interchain with G-Cter in SUMO2). 2 positions are modified to phosphoserine: serine 295 and serine 297. The RRM domain maps to 310-389 (VVLLRNMVGA…YFGGRVVKAC (80 aa)).

As to quaternary structure, binds SXL. Associates with the spliceosome. Interacts with SF3B1, SF1 and U2AF2.

The protein resides in the nucleus. Its function is as follows. Splice factor that binds to the single-stranded 3'AG at the exon/intron border and promotes its utilization in the second catalytic step. Involved in the regulation of alternative splicing and the utilization of cryptic splice sites. This is Splicing factor 45 (Rbm17) from Mus musculus (Mouse).